Here is a 258-residue protein sequence, read N- to C-terminus: Triosephosphate isomerase (258 aa).

Residue 11–13 coordinates substrate; it reads NWK. His-101 acts as the Electrophile in catalysis. The active-site Proton acceptor is Glu-173. Substrate is bound by residues Gly-179, Ser-219, and 240 to 241; that span reads GG.

Belongs to the triosephosphate isomerase family. Homodimer.

Its subcellular location is the cytoplasm. It carries out the reaction D-glyceraldehyde 3-phosphate = dihydroxyacetone phosphate. The protein operates within carbohydrate biosynthesis; gluconeogenesis. It functions in the pathway carbohydrate degradation; glycolysis; D-glyceraldehyde 3-phosphate from glycerone phosphate: step 1/1. Involved in the gluconeogenesis. Catalyzes stereospecifically the conversion of dihydroxyacetone phosphate (DHAP) to D-glyceraldehyde-3-phosphate (G3P). The protein is Triosephosphate isomerase of Streptomyces coelicolor (strain ATCC BAA-471 / A3(2) / M145).